The chain runs to 338 residues: Glyceraldehyde-3-phosphate dehydrogenase (338 aa).

NAD(+) contacts are provided by residues 11 to 12 (TI) and G111. Position 140–142 (140–142 (SCN)) interacts with D-glyceraldehyde 3-phosphate. C141 acts as the Nucleophile in catalysis. Residue R169 participates in NAD(+) binding. Position 195 to 196 (195 to 196 (HG)) interacts with D-glyceraldehyde 3-phosphate. Q302 contributes to the NAD(+) binding site.

The protein belongs to the glyceraldehyde-3-phosphate dehydrogenase family. Homotetramer.

The protein resides in the cytoplasm. The catalysed reaction is D-glyceraldehyde 3-phosphate + phosphate + NADP(+) = (2R)-3-phospho-glyceroyl phosphate + NADPH + H(+). It catalyses the reaction D-glyceraldehyde 3-phosphate + phosphate + NAD(+) = (2R)-3-phospho-glyceroyl phosphate + NADH + H(+). It participates in carbohydrate degradation; glycolysis; pyruvate from D-glyceraldehyde 3-phosphate: step 1/5. The sequence is that of Glyceraldehyde-3-phosphate dehydrogenase (gap) from Methanobacterium formicicum.